The following is a 395-amino-acid chain: S-adenosylmethionine synthase (395 aa).

Residue His-18 coordinates ATP. Asp-20 is a Mg(2+) binding site. Glu-46 provides a ligand contact to K(+). Residues Glu-59 and Gln-103 each coordinate L-methionine. Positions 103–113 (QSVDIAVGVDA) are flexible loop. ATP is bound by residues 170–172 (DAK), 235–236 (KF), Asp-244, 250–251 (RK), Ala-267, and Lys-271. Asp-244 provides a ligand contact to L-methionine. Lys-275 lines the L-methionine pocket.

It belongs to the AdoMet synthase family. In terms of assembly, homotetramer; dimer of dimers. Mg(2+) serves as cofactor. The cofactor is K(+).

It localises to the cytoplasm. The catalysed reaction is L-methionine + ATP + H2O = S-adenosyl-L-methionine + phosphate + diphosphate. Its pathway is amino-acid biosynthesis; S-adenosyl-L-methionine biosynthesis; S-adenosyl-L-methionine from L-methionine: step 1/1. In terms of biological role, catalyzes the formation of S-adenosylmethionine (AdoMet) from methionine and ATP. The overall synthetic reaction is composed of two sequential steps, AdoMet formation and the subsequent tripolyphosphate hydrolysis which occurs prior to release of AdoMet from the enzyme. This is S-adenosylmethionine synthase from Acidiphilium cryptum (strain JF-5).